The following is a 326-amino-acid chain: Ribose-phosphate pyrophosphokinase 4 (326 aa).

4 residues coordinate Mg(2+): aspartate 140, histidine 142, histidine 151, and aspartate 155.

Belongs to the ribose-phosphate pyrophosphokinase family.

The protein resides in the cytoplasm. It carries out the reaction D-ribose 5-phosphate + ATP = 5-phospho-alpha-D-ribose 1-diphosphate + AMP + H(+). It functions in the pathway metabolic intermediate biosynthesis; 5-phospho-alpha-D-ribose 1-diphosphate biosynthesis; 5-phospho-alpha-D-ribose 1-diphosphate from D-ribose 5-phosphate (route I): step 1/1. 5-phosphoribose 1-diphosphate synthase involved in nucleotide, histidine, and tryptophan biosynthesis. Active in heteromultimeric complexes with other 5-phosphoribose 1-diphosphate synthases (PRS2, PRS3, PRS4 and PRS5). In Saccharomyces cerevisiae (strain ATCC 204508 / S288c) (Baker's yeast), this protein is Ribose-phosphate pyrophosphokinase 4 (PRS4).